Here is a 328-residue protein sequence, read N- to C-terminus: ATP-dependent 6-phosphofructokinase (328 aa).

Gly-11 contributes to the ATP binding site. An ADP-binding site is contributed by 21 to 25 (RAAVR). ATP-binding positions include 72 to 73 (RS) and 102 to 105 (GNGT). Residue Asn-103 participates in Mg(2+) binding. Position 126-128 (126-128 (TID)) interacts with substrate. The active-site Proton acceptor is Asp-128. Position 155 (Arg-155) interacts with ADP. Residues Arg-163 and 170 to 172 (MGR) contribute to the substrate site. ADP-binding positions include 186–188 (GAE) and 214–216 (KAS). Substrate is bound by residues Glu-223, Arg-247, and 253-256 (HVQR).

This sequence belongs to the phosphofructokinase type A (PFKA) family. ATP-dependent PFK group I subfamily. Prokaryotic clade 'B1' sub-subfamily. Homotetramer. Requires Mg(2+) as cofactor.

It localises to the cytoplasm. It catalyses the reaction beta-D-fructose 6-phosphate + ATP = beta-D-fructose 1,6-bisphosphate + ADP + H(+). It functions in the pathway carbohydrate degradation; glycolysis; D-glyceraldehyde 3-phosphate and glycerone phosphate from D-glucose: step 3/4. With respect to regulation, allosterically activated by ADP and other diphosphonucleosides, and allosterically inhibited by phosphoenolpyruvate. Functionally, catalyzes the phosphorylation of D-fructose 6-phosphate to fructose 1,6-bisphosphate by ATP, the first committing step of glycolysis. This is ATP-dependent 6-phosphofructokinase from Cytophaga hutchinsonii (strain ATCC 33406 / DSM 1761 / CIP 103989 / NBRC 15051 / NCIMB 9469 / D465).